A 410-amino-acid polypeptide reads, in one-letter code: Cysteine desulfurase IscS (410 aa).

Pyridoxal 5'-phosphate-binding positions include 80–81 (AT), N160, Q188, and 208–210 (SGH). K211 bears the N6-(pyridoxal phosphate)lysine mark. T248 contacts pyridoxal 5'-phosphate. Catalysis depends on C334, which acts as the Cysteine persulfide intermediate. C334 lines the [2Fe-2S] cluster pocket.

It belongs to the class-V pyridoxal-phosphate-dependent aminotransferase family. NifS/IscS subfamily. As to quaternary structure, homodimer. Forms a heterotetramer with IscU, interacts with other sulfur acceptors. It depends on pyridoxal 5'-phosphate as a cofactor.

The protein localises to the cytoplasm. It carries out the reaction (sulfur carrier)-H + L-cysteine = (sulfur carrier)-SH + L-alanine. Its pathway is cofactor biosynthesis; iron-sulfur cluster biosynthesis. In terms of biological role, master enzyme that delivers sulfur to a number of partners involved in Fe-S cluster assembly, tRNA modification or cofactor biosynthesis. Catalyzes the removal of elemental sulfur atoms from cysteine to produce alanine. Functions as a sulfur delivery protein for Fe-S cluster synthesis onto IscU, an Fe-S scaffold assembly protein, as well as other S acceptor proteins. In Rickettsia bellii (strain OSU 85-389), this protein is Cysteine desulfurase IscS.